The primary structure comprises 345 residues: Phosphoribosylformylglycinamidine cyclo-ligase (345 aa).

Belongs to the AIR synthase family.

The protein resides in the cytoplasm. The catalysed reaction is 2-formamido-N(1)-(5-O-phospho-beta-D-ribosyl)acetamidine + ATP = 5-amino-1-(5-phospho-beta-D-ribosyl)imidazole + ADP + phosphate + H(+). The protein operates within purine metabolism; IMP biosynthesis via de novo pathway; 5-amino-1-(5-phospho-D-ribosyl)imidazole from N(2)-formyl-N(1)-(5-phospho-D-ribosyl)glycinamide: step 2/2. In Synechococcus sp. (strain CC9902), this protein is Phosphoribosylformylglycinamidine cyclo-ligase.